A 313-amino-acid polypeptide reads, in one-letter code: DNA-directed RNA polymerase subunit alpha (313 aa).

The segment at 1-229 is alpha N-terminal domain (alpha-NTD); that stretch reads MNSSNLLMEC…NLFKSIGEQK (229 aa). The tract at residues 243-313 is alpha C-terminal domain (alpha-CTD); the sequence is IKPIDPYTHI…LKNKLGIVLK (71 aa).

This sequence belongs to the RNA polymerase alpha chain family. In terms of assembly, in plastids the minimal PEP RNA polymerase catalytic core is composed of four subunits: alpha, beta, beta', and beta''. When a (nuclear-encoded) sigma factor is associated with the core the holoenzyme is formed, which can initiate transcription.

It is found in the plastid. It localises to the chloroplast. It catalyses the reaction RNA(n) + a ribonucleoside 5'-triphosphate = RNA(n+1) + diphosphate. In terms of biological role, DNA-dependent RNA polymerase catalyzes the transcription of DNA into RNA using the four ribonucleoside triphosphates as substrates. This Thalassiosira pseudonana (Marine diatom) protein is DNA-directed RNA polymerase subunit alpha.